A 1537-amino-acid chain; its full sequence is DNA (cytosine-5)-methyltransferase 1 (1537 aa).

Positions 1-13 (MPARSAPPPPALP) are enriched in pro residues. 2 disordered regions span residues 1-34 (MPAR…SEKE) and 97-232 (RASN…DEKR). The DMAP1-binding domain occupies 8–105 (PPPALPPALR…SRASNGCAGN (98 aa)). Positions 21 to 34 (RDLERDEDSLSEKE) are enriched in basic and acidic residues. Positions 129–154 (SSSSSSSSSSSSSSSSSSSSSLLPAP) are enriched in low complexity. Positions 171 to 194 (SPASSRVTRSSGRQPTILSVFSKG) are enriched in polar residues. Residues 182–194 (GRQPTILSVFSKG) form an interaction with PCNA region. Over residues 215-227 (KDEEEEEELEEKE) the composition is skewed to acidic residues. 3 residues coordinate Zn(2+): C263, C266, and H329. At S420 the chain carries Phosphoserine. A CXXC-type zinc finger spans residues 558 to 604 (NAMKRRRCGVCEVCQQPECGKCKACQNMVKFGGSGRSKQACLQRRCP). Zn(2+)-binding residues include C565, C568, C571, C576, C579, C582, C598, and C603. The disordered stretch occupies residues 614–638 (DEEVDDNIPEMPSPKKMLQGRKKKQ). 2 BAH domains span residues 667-791 (ETLE…ETPP) and 883-1011 (HYRK…EDPP). The tract at residues 1006-1050 (SFEDPPNHARSSGNKGKGKGKGKGKGKGKSSTTCEQSEPEPTELK) is disordered. 7 tandem repeats follow at residues 1020 to 1021 (KG), 1022 to 1023 (KG), 1024 to 1025 (KG), 1026 to 1027 (KG), 1028 to 1029 (KG), 1030 to 1031 (KG), and 1032 to 1033 (KG). Residues 1020–1035 (KGKGKGKGKGKGKGKS) form an 8 X 2 AA tandem repeats of K-G region. The segment covering 1021-1033 (GKGKGKGKGKGKG) has biased composition (basic residues). The 8; approximate repeat unit spans residues 1034–1035 (KS). The SAM-dependent MTase C5-type domain occupies 1054-1513 (LRTLDVFSGC…LEIRACVGAR (460 aa)). S-adenosyl-L-methionine is bound by residues S1061, 1065 to 1066 (GL), 1083 to 1084 (EM), 1105 to 1106 (DC), and C1106. C1141 is an active-site residue. N1492 and V1494 together coordinate S-adenosyl-L-methionine. The tract at residues 1518-1537 (SGAAVAPPAPEKMEMTAAAD) is disordered.

It belongs to the class I-like SAM-binding methyltransferase superfamily. C5-methyltransferase family. As to quaternary structure, homodimer. Interacts with PCNA. Testis and lung.

Its subcellular location is the nucleus. The catalysed reaction is a 2'-deoxycytidine in DNA + S-adenosyl-L-methionine = a 5-methyl-2'-deoxycytidine in DNA + S-adenosyl-L-homocysteine + H(+). Methylates CpG residues. Preferentially methylates hemimethylated DNA. It is responsible for maintaining methylation patterns established in development. Mediates transcriptional repression by direct binding to HDAC2. Plays a role in promoter hypermethylation and transcriptional silencing of tumor suppressor genes (TSGs) or other tumor-related genes. Also required to maintain a transcriptionally repressive state of genes in undifferentiated embryonic stem cells (ESCs). Associates at promoter regions of tumor suppressor genes (TSGs) leading to their gene silencing. The chain is DNA (cytosine-5)-methyltransferase 1 (DNMT1) from Gallus gallus (Chicken).